The sequence spans 69 residues: uncharacterized protein (69 aa).

The segment at glutamate 48–aspartate 69 is disordered.

This is an uncharacterized protein from Salmonella phage P22 (Bacteriophage P22).